A 353-amino-acid chain; its full sequence is Small ribosomal subunit biogenesis GTPase RsgA (353 aa).

Residues 1-24 (MSKNKLSKGQQRRVKANHQRRLKT) are disordered. Over residues 10–23 (QQRRVKANHQRRLK) the composition is skewed to basic residues. One can recognise a CP-type G domain in the interval 104–274 (ASVLTRPDFY…VIDSPGVREF (171 aa)). GTP contacts are provided by residues 160-163 (NKID) and 214-222 (GQSGVGKSS). Cys298, Cys303, His305, and Cys311 together coordinate Zn(2+).

This sequence belongs to the TRAFAC class YlqF/YawG GTPase family. RsgA subfamily. In terms of assembly, monomer. Associates with 30S ribosomal subunit, binds 16S rRNA. It depends on Zn(2+) as a cofactor.

The protein localises to the cytoplasm. Functionally, one of several proteins that assist in the late maturation steps of the functional core of the 30S ribosomal subunit. Helps release RbfA from mature subunits. May play a role in the assembly of ribosomal proteins into the subunit. Circularly permuted GTPase that catalyzes slow GTP hydrolysis, GTPase activity is stimulated by the 30S ribosomal subunit. This Klebsiella pneumoniae subsp. pneumoniae (strain ATCC 700721 / MGH 78578) protein is Small ribosomal subunit biogenesis GTPase RsgA.